The primary structure comprises 157 residues: ATP synthase subunit b' (157 aa).

Residues 22 to 42 form a helical membrane-spanning segment; it reads ATLPIIAVQFLLLVAVLNSLF.

It belongs to the ATPase B chain family. In terms of assembly, F-type ATPases have 2 components, F(1) - the catalytic core - and F(0) - the membrane proton channel. F(1) has five subunits: alpha(3), beta(3), gamma(1), delta(1), epsilon(1). F(0) has four main subunits: a(1), b(1), b'(1) and c(10-14). The alpha and beta chains form an alternating ring which encloses part of the gamma chain. F(1) is attached to F(0) by a central stalk formed by the gamma and epsilon chains, while a peripheral stalk is formed by the delta, b and b' chains.

It is found in the cellular thylakoid membrane. Its function is as follows. F(1)F(0) ATP synthase produces ATP from ADP in the presence of a proton or sodium gradient. F-type ATPases consist of two structural domains, F(1) containing the extramembraneous catalytic core and F(0) containing the membrane proton channel, linked together by a central stalk and a peripheral stalk. During catalysis, ATP synthesis in the catalytic domain of F(1) is coupled via a rotary mechanism of the central stalk subunits to proton translocation. Functionally, component of the F(0) channel, it forms part of the peripheral stalk, linking F(1) to F(0). The b'-subunit is a diverged and duplicated form of b found in plants and photosynthetic bacteria. The chain is ATP synthase subunit b' from Synechococcus sp. (strain JA-3-3Ab) (Cyanobacteria bacterium Yellowstone A-Prime).